We begin with the raw amino-acid sequence, 171 residues long: 3-hydroxydecanoyl-[acyl-carrier-protein] dehydratase (171 aa).

H71 is a catalytic residue.

Belongs to the thioester dehydratase family. FabA subfamily. In terms of assembly, homodimer.

It localises to the cytoplasm. The enzyme catalyses a (3R)-hydroxyacyl-[ACP] = a (2E)-enoyl-[ACP] + H2O. It carries out the reaction (3R)-hydroxydecanoyl-[ACP] = (2E)-decenoyl-[ACP] + H2O. It catalyses the reaction (2E)-decenoyl-[ACP] = (3Z)-decenoyl-[ACP]. It functions in the pathway lipid metabolism; fatty acid biosynthesis. In terms of biological role, necessary for the introduction of cis unsaturation into fatty acids. Catalyzes the dehydration of (3R)-3-hydroxydecanoyl-ACP to E-(2)-decenoyl-ACP and then its isomerization to Z-(3)-decenoyl-ACP. Can catalyze the dehydratase reaction for beta-hydroxyacyl-ACPs with saturated chain lengths up to 16:0, being most active on intermediate chain length. The sequence is that of 3-hydroxydecanoyl-[acyl-carrier-protein] dehydratase from Hamiltonella defensa subsp. Acyrthosiphon pisum (strain 5AT).